The primary structure comprises 578 residues: MNLQQLLEQKISAALHAAGAPEGSPAIVKPSGKPQFGDYQANGVMGAAKALKMNPRELATKVLDVLDLGDMAEKVEIAGPGFINIFLSKDWMSQSLRQVLADPRLTIPLDSPKQTVVVDYSAPNLAKEMHVGHLRSTIIGDAVVRTLEFLGHRVIRQNHVGDWGTQFGMLLAYMNKLKAENQQTLSMELADLENFYRQAKTCFDEDPEFKDSARQYVVKLQSGDQECVSLWKTFIDISLQHCEDVYERLNVSLTRADVMPESAYNEDLPNVIDDLREKGLLTNSDGAECVFMDEFKGKDDETLPLIVKKSDGGYLYATTDLAALRYRERVLKANRVLYFVDARQSLHLNQVYAAGRKAGFVSPDMSLEHMAFGMVLGADGKPFKTRDGGTVKLADLLTEAQGRAYAVVKGKNPEMPEEELNRIAHVVGMAAVKYADLSKNRSSDYIFSFDAMLSLEGNTAPYVQYAYSRVVNVFKKGEVGNLTFEGDLQLAEPIERALAVRLLQFNEILHSVASEGCPHILCGYLYDLSKEFASFYEGCPVLKAEEPVRSSRLMLSLLIAKTLKQGLDLLGIETLERM.

The 'HIGH' region motif lies at 123 to 133; the sequence is PNLAKEMHVGH.

Belongs to the class-I aminoacyl-tRNA synthetase family. As to quaternary structure, monomer.

It localises to the cytoplasm. The catalysed reaction is tRNA(Arg) + L-arginine + ATP = L-arginyl-tRNA(Arg) + AMP + diphosphate. The chain is Arginine--tRNA ligase from Hahella chejuensis (strain KCTC 2396).